The sequence spans 557 residues: Urocanate hydratase (557 aa).

Residues 48-49 (GG), Gln126, 178-180 (GMG), Asp198, Arg203, 244-245 (NA), 265-269 (QTSAH), 274-275 (YL), and Tyr323 each bind NAD(+). Residue Cys411 is part of the active site. Residue Gly493 participates in NAD(+) binding.

The protein belongs to the urocanase family. The cofactor is NAD(+).

It localises to the cytoplasm. It catalyses the reaction 4-imidazolone-5-propanoate = trans-urocanate + H2O. It functions in the pathway amino-acid degradation; L-histidine degradation into L-glutamate; N-formimidoyl-L-glutamate from L-histidine: step 2/3. Functionally, catalyzes the conversion of urocanate to 4-imidazolone-5-propionate. This Beutenbergia cavernae (strain ATCC BAA-8 / DSM 12333 / CCUG 43141 / JCM 11478 / NBRC 16432 / NCIMB 13614 / HKI 0122) protein is Urocanate hydratase.